We begin with the raw amino-acid sequence, 441 residues long: L-seryl-tRNA(Sec) selenium transferase (441 aa).

K283 carries the N6-(pyridoxal phosphate)lysine modification.

This sequence belongs to the SelA family. Pyridoxal 5'-phosphate serves as cofactor.

The protein resides in the cytoplasm. It carries out the reaction L-seryl-tRNA(Sec) + selenophosphate + H(+) = L-selenocysteinyl-tRNA(Sec) + phosphate. Its pathway is aminoacyl-tRNA biosynthesis; selenocysteinyl-tRNA(Sec) biosynthesis; selenocysteinyl-tRNA(Sec) from L-seryl-tRNA(Sec) (bacterial route): step 1/1. Functionally, converts seryl-tRNA(Sec) to selenocysteinyl-tRNA(Sec) required for selenoprotein biosynthesis. The chain is L-seryl-tRNA(Sec) selenium transferase from Campylobacter concisus (strain 13826).